Reading from the N-terminus, the 262-residue chain is Putative glutamine--fructose-6-phosphate aminotransferase [isomerizing] (262 aa).

Catalysis depends on Cys-2, which acts as the Nucleophile; for GATase activity. Positions 2 to 262 (CGIFGYCNFL…RKSPPFVHNT (261 aa)) constitute a Glutamine amidotransferase type-2 domain.

It carries out the reaction D-fructose 6-phosphate + L-glutamine = D-glucosamine 6-phosphate + L-glutamate. Its pathway is nucleotide-sugar biosynthesis; UDP-N-acetyl-alpha-D-glucosamine biosynthesis; alpha-D-glucosamine 6-phosphate from D-fructose 6-phosphate: step 1/1. Its function is as follows. Involved in amino sugar synthesis (formation of chitin, supplies the amino sugars of asparagine-linked oligosaccharides of glycoproteins). The sequence is that of Putative glutamine--fructose-6-phosphate aminotransferase [isomerizing] from Saccharomyces cerevisiae (strain ATCC 204508 / S288c) (Baker's yeast).